Here is an 851-residue protein sequence, read N- to C-terminus: Glycogen phosphorylase, liver form (851 aa).

An N-acetylalanine modification is found at Ala-2. The residue at position 15 (Ser-15) is a Phosphoserine; by PHK; in form phosphorylase a. Residues 43–45 (DRN), Tyr-76, and Arg-310 each bind AMP. Lys-364 bears the N6-succinyllysine mark. Lys-470 carries the N6-acetyllysine modification. A phosphoserine mark is found at Ser-524, Ser-561, and Ser-639. N6-(pyridoxal phosphate)lysine is present on Lys-681. Lys-796 is subject to N6-acetyllysine.

Belongs to the glycogen phosphorylase family. As to quaternary structure, homodimer; enzymatically active. Interacts with PPP1R3B; recruits the phosphatase PP1 which dephosphorylates and inactivates PYGL/glycogen phosphorylase. Pyridoxal 5'-phosphate serves as cofactor. Post-translationally, acetylation, which is up-regulated by glucose and insulin and down-regulated by glucagon, inhibits the glycogen phosphorylase activity by promoting PPP1R3B-mediated recruitment of phosphatase PP1 and Ser-15 dephosphorylation. In terms of processing, phosphorylation at Ser-15 converts inactive phosphorylase b into active phosphorylase a. Dephosphorylation of Ser-15 by phosphatase PP1 inactivates the enzyme.

It localises to the cytoplasm. Its subcellular location is the cytosol. It catalyses the reaction [(1-&gt;4)-alpha-D-glucosyl](n) + phosphate = [(1-&gt;4)-alpha-D-glucosyl](n-1) + alpha-D-glucose 1-phosphate. Its activity is regulated as follows. Allosterically regulated through the non-covalent binding of metabolites, being activated by AMP and inhibited by ATP, ADP, and glucose-6-phosphate. The activity is also controlled by post-translational modifications including phosphorylation and acetylation. Its function is as follows. Allosteric enzyme that catalyzes the rate-limiting step in glycogen catabolism, the phosphorolytic cleavage of glycogen to produce glucose-1-phosphate, and plays a central role in maintaining cellular and organismal glucose homeostasis. The polypeptide is Glycogen phosphorylase, liver form (Ovis aries (Sheep)).